The chain runs to 690 residues: Translation factor GUF1, mitochondrial (690 aa).

The disordered stretch occupies residues 40–68 (SVTVPAARRHNSTKSTNSTTSTNSTTATS). The span at 52 to 68 (TKSTNSTTSTNSTTATS) shows a compositional bias: low complexity. One can recognise a tr-type G domain in the interval 89-272 (ERYRNFCIVA…AVIKKMPAPV (184 aa)). GTP-binding positions include 98–105 (AHIDHGKS), 165–169 (DTPGH), and 219–222 (NKID).

This sequence belongs to the TRAFAC class translation factor GTPase superfamily. Classic translation factor GTPase family. LepA subfamily.

Its subcellular location is the mitochondrion inner membrane. It carries out the reaction GTP + H2O = GDP + phosphate + H(+). In terms of biological role, promotes mitochondrial protein synthesis. May act as a fidelity factor of the translation reaction, by catalyzing a one-codon backward translocation of tRNAs on improperly translocated ribosomes. Binds to mitochondrial ribosomes in a GTP-dependent manner. This Sordaria macrospora (strain ATCC MYA-333 / DSM 997 / K(L3346) / K-hell) protein is Translation factor GUF1, mitochondrial.